The sequence spans 277 residues: Release factor glutamine methyltransferase (277 aa).

S-adenosyl-L-methionine contacts are provided by residues 119–123 (GTGCG), D142, W170, and N184. 184–187 (NPPY) lines the substrate pocket.

It belongs to the protein N5-glutamine methyltransferase family. PrmC subfamily.

The enzyme catalyses L-glutaminyl-[peptide chain release factor] + S-adenosyl-L-methionine = N(5)-methyl-L-glutaminyl-[peptide chain release factor] + S-adenosyl-L-homocysteine + H(+). Functionally, methylates the class 1 translation termination release factors RF1/PrfA and RF2/PrfB on the glutamine residue of the universally conserved GGQ motif. The sequence is that of Release factor glutamine methyltransferase from Buchnera aphidicola subsp. Baizongia pistaciae (strain Bp).